The following is a 156-amino-acid chain: MSGGLLKALRSDSYVELSQYRDQHFRGDNEEQEKLLKKSCTLYVGNLSFYTTEEQIYELFSKSGDIKKIIMGLDKMKKTACGFCFVEYYSRADAENAMRYINGTRLDDRIIRTDWDAGFKEGRQYGRGRSGGQVRDEYRQDYDAGRGGYGKLAQNQ.

Ser2 bears the N-acetylserine mark. Phosphoserine occurs at positions 13 and 18. Residues Tyr20, Tyr43, 112–116, 123–127, and 133–134 contribute to the mRNA site; these read RTDWD, RQYGR, and QV. Residues 40–118 form the RRM domain; that stretch reads CTLYVGNLSF…RIIRTDWDAG (79 aa). Positions 124–156 are disordered; sequence QYGRGRSGGQVRDEYRQDYDAGRGGYGKLAQNQ. Basic and acidic residues predominate over residues 134-144; the sequence is VRDEYRQDYDA. Arg146 is modified (omega-N-methylarginine).

It belongs to the RRM NCBP2 family. Component of the nuclear cap-binding complex (CBC), a heterodimer composed of NCBP1/CBP80 and NCBP2/CBP20 that interacts with m7GpppG-capped RNA. Found in a U snRNA export complex with PHAX/RNUXA, NCBP1/CBP80, NCBP2/CBP20, RAN, XPO1 and m7G-capped RNA. Interacts with PHAX/RNUXA, EIF4G1, HNRNPF, HNRNPH1 and ALYREF/THOC4/ALY. Interacts with SRRT/ARS2 and KPNA3.

It localises to the nucleus. Its subcellular location is the cytoplasm. Component of the cap-binding complex (CBC), which binds co-transcriptionally to the 5' cap of pre-mRNAs and is involved in various processes such as pre-mRNA splicing, translation regulation, nonsense-mediated mRNA decay, RNA-mediated gene silencing (RNAi) by microRNAs (miRNAs) and mRNA export. The CBC complex is involved in mRNA export from the nucleus via its interaction with ALYREF/THOC4/ALY, leading to the recruitment of the mRNA export machinery to the 5' end of mRNA and to mRNA export in a 5' to 3' direction through the nuclear pore. The CBC complex is also involved in mediating U snRNA and intronless mRNAs export from the nucleus. The CBC complex is essential for a pioneer round of mRNA translation, before steady state translation when the CBC complex is replaced by cytoplasmic cap-binding protein eIF4E. The pioneer round of mRNA translation mediated by the CBC complex plays a central role in nonsense-mediated mRNA decay (NMD), NMD only taking place in mRNAs bound to the CBC complex, but not on eIF4E-bound mRNAs. The CBC complex enhances NMD in mRNAs containing at least one exon-junction complex (EJC) via its interaction with UPF1, promoting the interaction between UPF1 and UPF2. The CBC complex is also involved in 'failsafe' NMD, which is independent of the EJC complex, while it does not participate in Staufen-mediated mRNA decay (SMD). During cell proliferation, the CBC complex is also involved in microRNAs (miRNAs) biogenesis via its interaction with SRRT/ARS2, thereby being required for miRNA-mediated RNA interference. The CBC complex also acts as a negative regulator of PARN, thereby acting as an inhibitor of mRNA deadenylation. In the CBC complex, NCBP2/CBP20 recognizes and binds capped RNAs (m7GpppG-capped RNA) but requires NCBP1/CBP80 to stabilize the movement of its N-terminal loop and lock the CBC into a high affinity cap-binding state with the cap structure. The conventional cap-binding complex with NCBP2 binds both small nuclear RNA (snRNA) and messenger (mRNA) and is involved in their export from the nucleus. This chain is Nuclear cap-binding protein subunit 2 (NCBP2), found in Bos taurus (Bovine).